Reading from the N-terminus, the 176-residue chain is ATP-dependent protease subunit HslV (176 aa).

Residue Thr-5 is part of the active site. Residues Gly-161, Cys-164, and Thr-167 each coordinate Na(+).

The protein belongs to the peptidase T1B family. HslV subfamily. As to quaternary structure, a double ring-shaped homohexamer of HslV is capped on each side by a ring-shaped HslU homohexamer. The assembly of the HslU/HslV complex is dependent on binding of ATP.

The protein localises to the cytoplasm. The catalysed reaction is ATP-dependent cleavage of peptide bonds with broad specificity.. Allosterically activated by HslU binding. Its function is as follows. Protease subunit of a proteasome-like degradation complex believed to be a general protein degrading machinery. This chain is ATP-dependent protease subunit HslV, found in Wolinella succinogenes (strain ATCC 29543 / DSM 1740 / CCUG 13145 / JCM 31913 / LMG 7466 / NCTC 11488 / FDC 602W) (Vibrio succinogenes).